The primary structure comprises 291 residues: 33 kDa chaperonin (291 aa).

Disulfide bonds link Cys-229-Cys-231 and Cys-262-Cys-265.

It belongs to the HSP33 family. Post-translationally, under oxidizing conditions two disulfide bonds are formed involving the reactive cysteines. Under reducing conditions zinc is bound to the reactive cysteines and the protein is inactive.

It is found in the cytoplasm. Redox regulated molecular chaperone. Protects both thermally unfolding and oxidatively damaged proteins from irreversible aggregation. Plays an important role in the bacterial defense system toward oxidative stress. The sequence is that of 33 kDa chaperonin from Vibrio vulnificus (strain YJ016).